Here is a 117-residue protein sequence, read N- to C-terminus: UPF0342 protein LGAS_1451 (117 aa).

The protein belongs to the UPF0342 family.

This Lactobacillus gasseri (strain ATCC 33323 / DSM 20243 / BCRC 14619 / CIP 102991 / JCM 1131 / KCTC 3163 / NCIMB 11718 / NCTC 13722 / AM63) protein is UPF0342 protein LGAS_1451.